We begin with the raw amino-acid sequence, 538 residues long: Putative cysteine ligase BshC (538 aa).

Residues 460–484 adopt a coiled-coil conformation; that stretch reads KINEQIELLERMLKRNVEKKHEVEL.

Belongs to the BshC family.

Functionally, involved in bacillithiol (BSH) biosynthesis. May catalyze the last step of the pathway, the addition of cysteine to glucosamine malate (GlcN-Mal) to generate BSH. The chain is Putative cysteine ligase BshC from Bacillus cereus (strain ATCC 10987 / NRS 248).